A 466-amino-acid chain; its full sequence is Asparagine--tRNA ligase (466 aa).

It belongs to the class-II aminoacyl-tRNA synthetase family. In terms of assembly, homodimer.

It localises to the cytoplasm. The enzyme catalyses tRNA(Asn) + L-asparagine + ATP = L-asparaginyl-tRNA(Asn) + AMP + diphosphate + H(+). In Shewanella halifaxensis (strain HAW-EB4), this protein is Asparagine--tRNA ligase.